Here is a 430-residue protein sequence, read N- to C-terminus: KIN17-like protein (430 aa).

The C2H2-type zinc finger occupies 28–50 (CQMCQKQCRDENGFKCHCMSESH). Residues 51-160 (QRQMQVFGQA…KARLKRKRIK (110 aa)) are winged helix-turn-helix (wHTH). Residues 147–183 (EQAVKARLKRKRIKSDLAEDERQERMIARQIERAQQS) adopt a coiled-coil conformation. The Nuclear localization signal (NLS) motif lies at 155–158 (KRKR). 2 disordered regions span residues 179–230 (RAQQ…ANKA) and 261–284 (EEED…GKDA). A compositionally biased stretch (acidic residues) spans 191–224 (LGDDASPDGSEGESGSEDEYSDSENDHEGQEEDA). Basic and acidic residues predominate over residues 261-278 (EEEDEVSARDKEKEELAK). Positions 283–312 (DAINAAEARRSALDELMKEEEKAKERSNRK) form a coiled coil. The segment at 319 to 370 (GIVVKVMSKSLAEKGYCKQKGVVKRVIDKYVGEIEMLESKHVLRVDQDELET) is C-terminal subdomain A. The interval 376–427 (GGLVRIVNGAYRGSNARLLSVDTERFCAKVQVEKGLYDGKVLKAIEYEDICK) is C-terminal subdomain B.

The protein belongs to the KIN17 family.

Its subcellular location is the nucleus. This is KIN17-like protein from Oryza sativa subsp. japonica (Rice).